Consider the following 220-residue polypeptide: CASP-like protein 4B1 (220 aa).

The Cytoplasmic portion of the chain corresponds to 1–74; sequence MAMVTTEAAA…RWRREDMLDK (74 aa). The tract at residues 13-56 is disordered; it reads TTAATAAAEKPQDVEKPDYAPYNGASTTADGGTGARARRGDGGG. A helical membrane pass occupies residues 75-95; sequence SPLALHAAAAIFAFVALVLVA. Over 96–109 the chain is Extracellular; the sequence is SNQHGDWMQFDRYQ. Residues 110–127 traverse the membrane as a helical segment; that stretch reads EYRYLLAIASLALLYSLA. The Cytoplasmic segment spans residues 128-152; the sequence is QAARHAHRMRGGVDPVSSASARLLD. Residues 153–173 form a helical membrane-spanning segment; sequence FVGDQVVAYLLMSALSAAVPI. Topologically, residues 174–188 are extracellular; it reads TNRMRSAVVNNFTDA. A glycan (N-linked (GlcNAc...) asparagine) is linked at asparagine 184. A helical membrane pass occupies residues 189–209; sequence TAAAISMAFFSFVALALSAVV. Topologically, residues 210–220 are cytoplasmic; sequence SGYKLSKQTYM.

It belongs to the Casparian strip membrane proteins (CASP) family. In terms of assembly, homodimer and heterodimers.

The protein localises to the cell membrane. The polypeptide is CASP-like protein 4B1 (Sorghum bicolor (Sorghum)).